The primary structure comprises 32 residues: MSDIN-like toxin proprotein 3 (32 aa).

The propeptide occupies 1-10 (MSDINATRLP). A cross-link (cyclopeptide (Ser-Pro)) is located at residues 11 to 17 (SFFFPIP). Residues 18–32 (CISDDIEMVLTRGER) constitute a propeptide that is removed on maturation.

Belongs to the MSDIN fungal toxin family. In terms of processing, processed by the macrocyclase-peptidase enzyme POPB to yield a toxic cyclic heptapeptide. POPB first removes 10 residues from the N-terminus. Conformational trapping of the remaining peptide forces the enzyme to release this intermediate rather than proceed to macrocyclization. The enzyme rebinds the remaining peptide in a different conformation and catalyzes macrocyclization of the N-terminal 8 residues.

Its function is as follows. Probable toxin that belongs to the MSDIN-like toxin family responsible for a large number of food poisoning cases and deaths. In Amanita phalloides (Death cap), this protein is MSDIN-like toxin proprotein 3.